The following is a 228-amino-acid chain: Lipoprotein-releasing system ATP-binding protein LolD (228 aa).

Positions 7-228 constitute an ABC transporter domain; it reads LNCQNLTKDY…MQDGVLRPEM (222 aa). 43 to 50 provides a ligand contact to ATP; the sequence is GSSGSGKS.

It belongs to the ABC transporter superfamily. Lipoprotein translocase (TC 3.A.1.125) family. In terms of assembly, the complex is composed of two ATP-binding proteins (LolD) and two transmembrane proteins (LolC and LolE).

It is found in the cell inner membrane. Its function is as follows. Part of the ABC transporter complex LolCDE involved in the translocation of mature outer membrane-directed lipoproteins, from the inner membrane to the periplasmic chaperone, LolA. Responsible for the formation of the LolA-lipoprotein complex in an ATP-dependent manner. The sequence is that of Lipoprotein-releasing system ATP-binding protein LolD from Mannheimia succiniciproducens (strain KCTC 0769BP / MBEL55E).